The sequence spans 363 residues: NAD(P)H-quinone oxidoreductase subunit 1, chloroplastic (363 aa).

The next 7 membrane-spanning stretches (helical) occupy residues 30 to 50, 98 to 118, 129 to 149, 165 to 185, 253 to 273, 303 to 323, and 336 to 356; these read LVPILTLVVGITIGVLVIVWL, FSIGPSMAVISILLSYSVIPF, VGVFLWIAISSIAPIGLLMSG, AAQSISYEIPLTLCVLSISLL, FAFFYITSYFNLLVSSLFVTI, TTTELFITLAKTFFFLFISIT, and LLNLGWKFLLPISLGNLLLTT.

Belongs to the complex I subunit 1 family. As to quaternary structure, NDH is composed of at least 16 different subunits, 5 of which are encoded in the nucleus.

Its subcellular location is the plastid. The protein resides in the chloroplast thylakoid membrane. It catalyses the reaction a plastoquinone + NADH + (n+1) H(+)(in) = a plastoquinol + NAD(+) + n H(+)(out). It carries out the reaction a plastoquinone + NADPH + (n+1) H(+)(in) = a plastoquinol + NADP(+) + n H(+)(out). Its function is as follows. NDH shuttles electrons from NAD(P)H:plastoquinone, via FMN and iron-sulfur (Fe-S) centers, to quinones in the photosynthetic chain and possibly in a chloroplast respiratory chain. The immediate electron acceptor for the enzyme in this species is believed to be plastoquinone. Couples the redox reaction to proton translocation, and thus conserves the redox energy in a proton gradient. This chain is NAD(P)H-quinone oxidoreductase subunit 1, chloroplastic, found in Pelargonium hortorum (Common geranium).